A 284-amino-acid polypeptide reads, in one-letter code: NAD kinase (284 aa).

Catalysis depends on Asp-71, which acts as the Proton acceptor. NAD(+) is bound by residues 71 to 72, 144 to 145, Asp-174, 185 to 190, and Gln-242; these read DG, ND, and TAYNLS.

Belongs to the NAD kinase family. A divalent metal cation is required as a cofactor.

The protein resides in the cytoplasm. It carries out the reaction NAD(+) + ATP = ADP + NADP(+) + H(+). Its function is as follows. Involved in the regulation of the intracellular balance of NAD and NADP, and is a key enzyme in the biosynthesis of NADP. Catalyzes specifically the phosphorylation on 2'-hydroxyl of the adenosine moiety of NAD to yield NADP. This chain is NAD kinase, found in Sulfurimonas denitrificans (strain ATCC 33889 / DSM 1251) (Thiomicrospira denitrificans (strain ATCC 33889 / DSM 1251)).